The sequence spans 393 residues: NAD(P)H-quinone oxidoreductase subunit H, chloroplastic (393 aa).

It belongs to the complex I 49 kDa subunit family. NDH is composed of at least 16 different subunits, 5 of which are encoded in the nucleus.

The protein localises to the plastid. The protein resides in the chloroplast thylakoid membrane. It catalyses the reaction a plastoquinone + NADH + (n+1) H(+)(in) = a plastoquinol + NAD(+) + n H(+)(out). The enzyme catalyses a plastoquinone + NADPH + (n+1) H(+)(in) = a plastoquinol + NADP(+) + n H(+)(out). Its function is as follows. NDH shuttles electrons from NAD(P)H:plastoquinone, via FMN and iron-sulfur (Fe-S) centers, to quinones in the photosynthetic chain and possibly in a chloroplast respiratory chain. The immediate electron acceptor for the enzyme in this species is believed to be plastoquinone. Couples the redox reaction to proton translocation, and thus conserves the redox energy in a proton gradient. The chain is NAD(P)H-quinone oxidoreductase subunit H, chloroplastic from Ranunculus macranthus (Large buttercup).